The following is a 272-amino-acid chain: Dermonecrotic toxin LvSicTox-alphaIC1biii (272 aa).

Residue histidine 5 is part of the active site. Glutamate 25 and aspartate 27 together coordinate Mg(2+). Catalysis depends on histidine 41, which acts as the Nucleophile. 2 disulfide bridges follow: cysteine 45–cysteine 51 and cysteine 47–cysteine 189. A Mg(2+)-binding site is contributed by aspartate 84.

Belongs to the arthropod phospholipase D family. Class II subfamily. It depends on Mg(2+) as a cofactor. Expressed by the venom gland.

It is found in the secreted. The enzyme catalyses an N-(acyl)-sphingosylphosphocholine = an N-(acyl)-sphingosyl-1,3-cyclic phosphate + choline. It catalyses the reaction an N-(acyl)-sphingosylphosphoethanolamine = an N-(acyl)-sphingosyl-1,3-cyclic phosphate + ethanolamine. The catalysed reaction is a 1-acyl-sn-glycero-3-phosphocholine = a 1-acyl-sn-glycero-2,3-cyclic phosphate + choline. It carries out the reaction a 1-acyl-sn-glycero-3-phosphoethanolamine = a 1-acyl-sn-glycero-2,3-cyclic phosphate + ethanolamine. In terms of biological role, dermonecrotic toxins cleave the phosphodiester linkage between the phosphate and headgroup of certain phospholipids (sphingolipid and lysolipid substrates), forming an alcohol (often choline) and a cyclic phosphate. This toxin acts on sphingomyelin (SM). It may also act on ceramide phosphoethanolamine (CPE), lysophosphatidylcholine (LPC) and lysophosphatidylethanolamine (LPE), but not on lysophosphatidylserine (LPS), and lysophosphatidylglycerol (LPG). It acts by transphosphatidylation, releasing exclusively cyclic phosphate products as second products. Induces dermonecrosis, hemolysis, increased vascular permeability, edema, inflammatory response, and platelet aggregation. The polypeptide is Dermonecrotic toxin LvSicTox-alphaIC1biii (Loxosceles variegata (Recluse spider)).